The primary structure comprises 231 residues: Protein C activator (231 aa).

Residues 1-222 (VIGGDECNIN…YTDWIQSIIS (222 aa)) enclose the Peptidase S1 domain. 6 cysteine pairs are disulfide-bonded: C7–C138, C25–C41, C73–C229, C117–C183, C149–C162, and C173–C198. N-linked (GlcNAc...) asparagine glycosylation occurs at N21. The Charge relay system role is filled by H40. An N-linked (GlcNAc...) asparagine glycan is attached at N78. Catalysis depends on D85, which acts as the Charge relay system. N129 is a glycosylation site (N-linked (GlcNAc...) asparagine). The Charge relay system role is filled by S177.

This sequence belongs to the peptidase S1 family. Snake venom subfamily. In terms of assembly, monomer. Expressed by the venom gland.

It is found in the secreted. In terms of biological role, snake venom serine protease that selectively cleaves the heavy chain of protein C (PROC). This activation is thrombomodulin-independent. The sequence is that of Protein C activator from Agkistrodon contortrix contortrix (Southern copperhead).